The sequence spans 1187 residues: Nucleolar protein 6 (1187 aa).

Residues 1–20 (MGRIKENQSKKKTLLRDSKA) show a composition bias toward basic and acidic residues. Disordered regions lie at residues 1 to 64 (MGRI…FKHP) and 1134 to 1187 (REQR…SALC).

This sequence belongs to the NRAP family. Part of the small subunit (SSU) processome, composed of more than 70 proteins and the RNA chaperone small nucleolar RNA (snoRNA) U3.

It is found in the nucleus. The protein localises to the nucleolus. Its subcellular location is the chromosome. Functionally, part of the small subunit (SSU) processome, first precursor of the small eukaryotic ribosomal subunit. During the assembly of the SSU processome in the nucleolus, many ribosome biogenesis factors, an RNA chaperone and ribosomal proteins associate with the nascent pre-rRNA and work in concert to generate RNA folding, modifications, rearrangements and cleavage as well as targeted degradation of pre-ribosomal RNA by the RNA exosome. The polypeptide is Nucleolar protein 6 (Drosophila mojavensis (Fruit fly)).